Reading from the N-terminus, the 178-residue chain is Cytochrome b6-f complex iron-sulfur subunit (178 aa).

The chain crosses the membrane as a helical span at residues Leu-20 to Met-42. One can recognise a Rieske domain in the interval Lys-65 to Val-161. [2Fe-2S] cluster is bound by residues Cys-107, His-109, Cys-125, and His-128. Cys-112 and Cys-127 are oxidised to a cystine.

Belongs to the Rieske iron-sulfur protein family. In terms of assembly, the 4 large subunits of the cytochrome b6-f complex are cytochrome b6, subunit IV (17 kDa polypeptide, PetD), cytochrome f and the Rieske protein, while the 4 small subunits are PetG, PetL, PetM and PetN. The complex functions as a dimer. Requires [2Fe-2S] cluster as cofactor.

It is found in the cellular thylakoid membrane. It carries out the reaction 2 oxidized [plastocyanin] + a plastoquinol + 2 H(+)(in) = 2 reduced [plastocyanin] + a plastoquinone + 4 H(+)(out). Functionally, component of the cytochrome b6-f complex, which mediates electron transfer between photosystem II (PSII) and photosystem I (PSI), cyclic electron flow around PSI, and state transitions. This is Cytochrome b6-f complex iron-sulfur subunit from Prochlorococcus marinus (strain MIT 9301).